We begin with the raw amino-acid sequence, 361 residues long: Hydroxyproline O-arabinosyltransferase PLENTY (361 aa).

A helical; Signal-anchor membrane pass occupies residues 13 to 33; that stretch reads LLMLLMVLGFFFATYNLVSMI.

It localises to the golgi apparatus membrane. The catalysed reaction is trans-4-hydroxy-L-prolyl-[protein] + UDP-beta-L-arabinofuranose = O-(beta-L-arabinofuranosyl)-trans-4-hydroxy-L-prolyl-[protein] + UDP + H(+). Glycosyltransferase involved in the O-arabinosylation of several proteins including extensins and small signaling peptides. Catalyzes the transfer of the initial L-arabinose to the hydroxyl group of Hyp residues. Probably involved in the arabinosylation of CLAVATA3/ESR-related (CLE) signaling peptides that move from root to shoot, to interact with receptor kinase signaling that regulates nodulation. Involved in long distance nodulation signaling events. Involved in the autoregulation of nodulation (AON), a long distance systemic signaling from root to shoot and back again, which allows legumes to limit the number of root nodules formed based on available nitrogen and previous rhizobial colonization. The chain is Hydroxyproline O-arabinosyltransferase PLENTY from Lotus japonicus (Lotus corniculatus var. japonicus).